The chain runs to 257 residues: Global transcriptional regulator CodY (257 aa).

The interval 1-155 (MSLLSKTREL…AATVIGMEIL (155 aa)) is GAF domain. Positions 203 to 222 (ASKVADRVGITRSVIVNALR) form a DNA-binding region, H-T-H motif.

This sequence belongs to the CodY family.

It localises to the cytoplasm. Functionally, DNA-binding global transcriptional regulator which is involved in the adaptive response to starvation and acts by directly or indirectly controlling the expression of numerous genes in response to nutrient availability. During rapid exponential growth, CodY is highly active and represses genes whose products allow adaptation to nutrient depletion. The sequence is that of Global transcriptional regulator CodY from Staphylococcus epidermidis (strain ATCC 12228 / FDA PCI 1200).